Consider the following 255-residue polypeptide: tRNA (guanine-N(1)-)-methyltransferase (255 aa).

S-adenosyl-L-methionine contacts are provided by residues Gly-119 and Ile-139 to Leu-144.

This sequence belongs to the RNA methyltransferase TrmD family. In terms of assembly, homodimer.

The protein resides in the cytoplasm. The enzyme catalyses guanosine(37) in tRNA + S-adenosyl-L-methionine = N(1)-methylguanosine(37) in tRNA + S-adenosyl-L-homocysteine + H(+). Specifically methylates guanosine-37 in various tRNAs. This chain is tRNA (guanine-N(1)-)-methyltransferase, found in Pseudoalteromonas translucida (strain TAC 125).